A 207-amino-acid polypeptide reads, in one-letter code: HTH-type transcriptional regulator AqdR (207 aa).

An HTH tetR-type domain is found at Ala-16–Glu-76. The segment at residues Gly-39 to Trp-58 is a DNA-binding region (H-T-H motif).

May regulate the expression of genes involved in the degradation of the Pseudomonas aeruginosa quorum sensing signal molecules HHQ (2-heptyl-4-quinolone) and PQS (2-heptyl-3-hydroxy-4-quinolone). The chain is HTH-type transcriptional regulator AqdR from Rhodococcus erythropolis (Arthrobacter picolinophilus).